Here is a 332-residue protein sequence, read N- to C-terminus: Geranylgeranyl diphosphate synthase (332 aa).

Isopentenyl diphosphate is bound by residues Lys45, Arg48, and His77. Residues Asp84 and Asp88 each coordinate Mg(2+). Arg93 contacts an all-trans-polyprenyl diphosphate. Arg94 serves as a coordination point for isopentenyl diphosphate. The an all-trans-polyprenyl diphosphate site is built by Lys177, Thr178, Gln215, Lys232, and Lys242.

It belongs to the FPP/GGPP synthase family. The cofactor is Mg(2+).

It carries out the reaction isopentenyl diphosphate + (2E,6E)-farnesyl diphosphate = (2E,6E,10E)-geranylgeranyl diphosphate + diphosphate. It participates in isoprenoid biosynthesis; geranylgeranyl diphosphate biosynthesis; geranylgeranyl diphosphate from farnesyl diphosphate and isopentenyl diphosphate: step 1/1. Functionally, catalyzes the condensation of isopentenyl pyrophosphate with the allylic pyrophosphates to yield geranylgeranyl diphosphate (GGPP) which is a precursor of the ether-linked lipids. This chain is Geranylgeranyl diphosphate synthase (gds), found in Saccharolobus solfataricus (strain ATCC 35092 / DSM 1617 / JCM 11322 / P2) (Sulfolobus solfataricus).